We begin with the raw amino-acid sequence, 252 residues long: AA9 family lytic polysaccharide monooxygenase B (252 aa).

Positions 1–20 are cleaved as a signal peptide; sequence MVSFTKTFFAIVACALGVQA. Residues histidine 21 and histidine 106 each contribute to the Cu(2+) site. A disulfide bridge connects residues cysteine 72 and cysteine 198. An N-linked (GlcNAc...) asparagine glycan is attached at asparagine 158. O2 contacts are provided by histidine 184 and glutamine 193. A Cu(2+)-binding site is contributed by tyrosine 195. N-linked (GlcNAc...) asparagine glycosylation is present at asparagine 237.

The protein belongs to the polysaccharide monooxygenase AA9 family. It depends on Cu(2+) as a cofactor.

Its subcellular location is the secreted. The catalysed reaction is [(1-&gt;4)-beta-D-glucosyl]n+m + reduced acceptor + O2 = 4-dehydro-beta-D-glucosyl-[(1-&gt;4)-beta-D-glucosyl]n-1 + [(1-&gt;4)-beta-D-glucosyl]m + acceptor + H2O.. In terms of biological role, lytic polysaccharide monooxygenase (LPMO) that depolymerizes crystalline and amorphous polysaccharides via the oxidation of scissile alpha- or beta-(1-4)-glycosidic bonds, yielding C1 or C4 oxidation products. Catalysis by LPMOs requires the reduction of the active-site copper from Cu(II) to Cu(I) by a reducing agent and H(2)O(2) or O(2) as a cosubstrate. The synergistic activity of LPMO9B with xylanase Xyl10G or cellulase Cel5B shows efficient bioconversion rates of 56 and 174 percent in pretreated kenaf (Hibiscus cannabinus) and oak, respectively. The protein is AA9 family lytic polysaccharide monooxygenase B of Gloeophyllum trabeum (strain ATCC 11539 / FP-39264 / Madison 617) (Brown rot fungus).